The primary structure comprises 544 residues: Chaperonin GroEL (544 aa).

ATP is bound by residues 30–33 (TLGP), lysine 51, 87–91 (DGTTT), glycine 415, and aspartate 495.

It belongs to the chaperonin (HSP60) family. As to quaternary structure, forms a cylinder of 14 subunits composed of two heptameric rings stacked back-to-back. Interacts with the co-chaperonin GroES.

The protein resides in the cytoplasm. It carries out the reaction ATP + H2O + a folded polypeptide = ADP + phosphate + an unfolded polypeptide.. Functionally, together with its co-chaperonin GroES, plays an essential role in assisting protein folding. The GroEL-GroES system forms a nano-cage that allows encapsulation of the non-native substrate proteins and provides a physical environment optimized to promote and accelerate protein folding. In Neisseria gonorrhoeae (strain ATCC 700825 / FA 1090), this protein is Chaperonin GroEL.